A 348-amino-acid chain; its full sequence is NADH-ubiquinone oxidoreductase chain 2 (348 aa).

Transmembrane regions (helical) follow at residues 13 to 33 (VITG…WAGL), 60 to 80 (FLAQ…NNLL), 96 to 116 (PLAM…HFWV), 124 to 144 (PLTS…SIMY), 150 to 170 (INTH…SWGG), 200 to 220 (TITT…FLTL), 241 to 261 (LMPL…LTGF), 278 to 298 (IIPT…MRLI), and 325 to 345 (LFIP…PLIL).

This sequence belongs to the complex I subunit 2 family. Core subunit of respiratory chain NADH dehydrogenase (Complex I) which is composed of 45 different subunits. Interacts with TMEM242.

The protein resides in the mitochondrion inner membrane. The enzyme catalyses a ubiquinone + NADH + 5 H(+)(in) = a ubiquinol + NAD(+) + 4 H(+)(out). Core subunit of the mitochondrial membrane respiratory chain NADH dehydrogenase (Complex I) which catalyzes electron transfer from NADH through the respiratory chain, using ubiquinone as an electron acceptor. Essential for the catalytic activity and assembly of complex I. This is NADH-ubiquinone oxidoreductase chain 2 from Papio hamadryas (Hamadryas baboon).